Here is a 313-residue protein sequence, read N- to C-terminus: Cytochrome f (313 aa).

The signal sequence occupies residues 1-30; that stretch reads MRNWSFSKAALTVSLLALSWSPFGPAEVQA. Positions 31, 51, 54, and 55 each coordinate heme. The chain crosses the membrane as a helical span at residues 279–298; it reads VQGLIIFFAFVLIAQVFLVL.

This sequence belongs to the cytochrome f family. In terms of assembly, the 4 large subunits of the cytochrome b6-f complex are cytochrome b6, subunit IV (17 kDa polypeptide, petD), cytochrome f and the Rieske protein, while the 4 small subunits are PetG, PetL, PetM and PetN. The complex functions as a dimer. Heme serves as cofactor.

It localises to the plastid. Its subcellular location is the chloroplast thylakoid membrane. Its function is as follows. Component of the cytochrome b6-f complex, which mediates electron transfer between photosystem II (PSII) and photosystem I (PSI), cyclic electron flow around PSI, and state transitions. The polypeptide is Cytochrome f (Nephroselmis olivacea (Green alga)).